We begin with the raw amino-acid sequence, 153 residues long: Ribosome maturation factor RimP (153 aa).

Belongs to the RimP family.

The protein localises to the cytoplasm. In terms of biological role, required for maturation of 30S ribosomal subunits. The polypeptide is Ribosome maturation factor RimP (Coxiella burnetii (strain CbuK_Q154) (Coxiella burnetii (strain Q154))).